Consider the following 261-residue polypeptide: Cyclin-J18-like (261 aa).

It belongs to the cyclin family.

This chain is Cyclin-J18-like, found in Oryza sativa subsp. japonica (Rice).